Reading from the N-terminus, the 331-residue chain is 5-dehydro-2-deoxygluconokinase (331 aa).

It belongs to the carbohydrate kinase PfkB family.

It carries out the reaction 5-dehydro-2-deoxy-D-gluconate + ATP = 6-phospho-5-dehydro-2-deoxy-D-gluconate + ADP + H(+). The protein operates within polyol metabolism; myo-inositol degradation into acetyl-CoA; acetyl-CoA from myo-inositol: step 5/7. In terms of biological role, catalyzes the phosphorylation of 5-dehydro-2-deoxy-D-gluconate (2-deoxy-5-keto-D-gluconate or DKG) to 6-phospho-5-dehydro-2-deoxy-D-gluconate (DKGP). The polypeptide is 5-dehydro-2-deoxygluconokinase (Photobacterium profundum (strain SS9)).